Here is a 377-residue protein sequence, read N- to C-terminus: MANSANTNTVPKLYRSVIEDVINDVRDIFLDDGVDEQVLMELKTLWENKLMQSRAVDGFHSEEQQLLLQVQQQHQPQQQQHHHHHHHQQAQPQQTVPQQAQTQQVLIPASQQATAPQVIVPDSKLIQHMNASSITSAAATAATLALPAGVTPVQQILTNSGQLLQVVRAANGAQYIFQPQQSVVLQQQVIPQMQPGGVQAPVIQQVLAPLPGGISPQTGVIIQPQQILFTGNKTQVIPTTVAAPTPAQAQIPAAGQQQPQAQPAQQQAPLVLQVDGTGDTSSEEDEDEEEDYDDDEEEDKEKDGAEDGQVEEEPLNSEDDVSDEEGQELFDTENVVVCQYDKIHRSKNKWKFHLKDGIMNLNGRDYIFSKAIGDAEW.

An N-acetylalanine modification is found at alanine 2. 3 stretches are compositionally biased toward low complexity: residues 69–79 (QVQQQHQPQQQ), 89–105 (QAQPQQTVPQQAQTQQV), and 248–280 (QAQIPAAGQQQPQAQPAQQQAPLVLQVDGTGDT). Disordered stretches follow at residues 69–107 (QVQQQHQPQQQQHHHHHHHQQAQPQQTVPQQAQTQQVLI) and 248–330 (QAQI…QELF). Serine 281 and serine 282 each carry phosphoserine; by TAF1. Positions 281-330 (SSEEDEDEEEDYDDDEEEDKEKDGAEDGQVEEEPLNSEDDVSDEEGQELF) are enriched in acidic residues. Residues serine 317 and serine 322 each carry the phosphoserine modification. DNA is bound by residues histidine 344 and arginine 345.

Belongs to the TFIIA subunit 1 family. TFIIA is a heterodimer of the large unprocessed subunit 1 and a small subunit gamma. It was originally believed to be a heterotrimer of an alpha (p35), a beta (p19) and a gamma subunit (p12). TFIIA forms a complex with TBP. Part of TBP-based Pol II pre-initiation complex (PIC), in which Pol II core assembles with general transcription factors and other specific initiation factors including GTF2E1, GTF2E2, GTF2F1, GTF2F2, TCEA1, ERCC2, ERCC3, GTF2H2, GTF2H3, GTF2H4, GTF2H5, GTF2A1, GTF2A2, GTF2B and TBP; this large multi-subunit PIC complex mediates DNA unwinding and targets Pol II core to the transcription start site where the first phosphodiester bond forms. In terms of processing, the alpha and beta subunits are postranslationally produced from the precursor formby TASP1. The cleavage promotes proteasomal degradation.

It localises to the nucleus. Its function is as follows. TFIIA is a component of the transcription machinery of RNA polymerase II and plays an important role in transcriptional activation. TFIIA in a complex with TBP mediates transcriptional activity. This Rattus norvegicus (Rat) protein is Transcription initiation factor IIA subunit 1 (Gtf2a1).